Reading from the N-terminus, the 113-residue chain is Ranasmurfin (113 aa).

Tyr-2 is subject to 2',4',5'-topaquinone. Residues 2–31 constitute a cross-link (lysine tyrosylquinone (Tyr-Lys)); it reads YACSFPPSEIPGSKECLAEALQKHQGFKKK. 3 disulfide bridges follow: Cys-4–Cys-62, Cys-17–Cys-65, and Cys-37–Cys-101. Position 9 is an aminomalonic acid (Ser); in chain B (Ser-9). The S-cysteinyl 3-(oxidosulfanyl)alanine (Cys-Cys); in chain B cross-link spans 17-65; that stretch reads CLAEALQKHQGFKKKSYALICAYLNYKEDAENYERAAEDFDSAVKCTGC. A cross-link (lysine tyrosylquinone (Lys-Tyr)) is located at residues 30-108; the sequence is KKSYALICAY…SLCTLFQKLY (79 aa). Cys-65 is subject to Cysteine sulfenic acid (-SOH); in chain B. At Tyr-108 the chain carries 2',4',5'-topaquinone. Zn(2+) contacts are provided by Tyr-108 and His-112. Residue Tyr-108 forms a 5'-tyrosyl-5'-aminotyrosine (Tyr-Tyr) (interchain with Y-108) linkage.

As to quaternary structure, homodimer. The two chains, designated A and B, differ in their modifications, but not, it is thought, in their sequence. Requires Zn(2+) as cofactor. As to expression, foam nest.

The protein localises to the secreted. This Polypedates leucomystax (Common tree frog) protein is Ranasmurfin.